The sequence spans 411 residues: Snake venom metalloproteinase VMP1 (411 aa).

The signal sequence occupies residues 1-20; it reads MIQVLLVTICLAAFPYQGSS. Positions 21-189 are excised as a propeptide; sequence IILESGNVND…KKAFQLNLTP (169 aa). The Peptidase M12B domain maps to 197 to 393; sequence RYVELVIIAD…KNPQCILNKP (197 aa). Positions 200 and 284 each coordinate Ca(2+). Intrachain disulfides connect Cys308/Cys388, Cys348/Cys372, and Cys350/Cys355. The N-linked (GlcNAc...) asparagine glycan is linked to Asn311. His333 contributes to the Zn(2+) binding site. Glu334 is an active-site residue. Residues His337 and His343 each contribute to the Zn(2+) site. Cys388, Asn391, Val403, Asn406, Leu408, and Glu410 together coordinate Ca(2+).

Belongs to the venom metalloproteinase (M12B) family. P-I subfamily. Monomer. Zn(2+) serves as cofactor. Expressed by the venom gland.

The protein localises to the secreted. Its activity is regulated as follows. Inhibited by EDTA and 1,10-phenanthroline, but not by PMSF. In terms of biological role, this venom zinc protease has fibrinolytic activity. The recombinant enzyme cleaves both alpha- (FGA) and beta-chains (FGB) of fibrinogen, but not the gamma-chain. The recombinant protein does not produce hemorrhage in mice and does not have effect on ADP- or collagen-stimulated platelet aggregation. This is Snake venom metalloproteinase VMP1 from Agkistrodon piscivorus leucostoma (Western cottonmouth).